The following is a 478-amino-acid chain: UDP-glycosyltransferase 71B5 (478 aa).

Residues Ser280, 347–349 (APQ), 364–372 (HCGWNSILE), and 386–389 (YAEQ) contribute to the UDP-alpha-D-glucose site.

This sequence belongs to the UDP-glycosyltransferase family.

Its function is as follows. Possesses low quercetin 3-O-glucosyltransferase activity in vitro. This chain is UDP-glycosyltransferase 71B5 (UGT71B5), found in Arabidopsis thaliana (Mouse-ear cress).